A 317-amino-acid chain; its full sequence is Small ribosomal subunit protein RACK1 (317 aa).

7 WD repeats span residues 13–44 (GHSG…IMWK), 61–91 (GHSH…RLWD), 103–133 (GHTK…KLWN), 146–178 (GHTE…KVWN), 190–220 (GHTG…MLWD), 231–260 (DSGD…KIWD), and 281–311 (AEPP…RVWQ).

The protein belongs to the WD repeat G protein beta family. Ribosomal protein RACK1 subfamily.

Its subcellular location is the cytoplasm. Involved in the recruitment, assembly and/or regulation of a variety of signaling molecules. Interacts with a wide variety of proteins and plays a role in many cellular processes. Required for VANGL2 membrane localization, inhibits Wnt signaling and regulates cellular polarization and oriented cell division during gastrulation. This is Small ribosomal subunit protein RACK1 (gnb2l1) from Oreochromis niloticus (Nile tilapia).